The sequence spans 382 residues: Lipid-A-disaccharide synthase (382 aa).

This sequence belongs to the LpxB family.

The catalysed reaction is 2-N,3-O-bis[(3R)-3-hydroxytetradecanoyl]-alpha-D-glucosaminyl 1-phosphate + UDP-2-N,3-O-bis[(3R)-3-hydroxytetradecanoyl]-alpha-D-glucosamine = lipid A disaccharide (E. coli) + UDP + H(+). The enzyme catalyses a lipid X + a UDP-2-N,3-O-bis[(3R)-3-hydroxyacyl]-alpha-D-glucosamine = a lipid A disaccharide + UDP + H(+). It functions in the pathway glycolipid biosynthesis; lipid IV(A) biosynthesis; lipid IV(A) from (3R)-3-hydroxytetradecanoyl-[acyl-carrier-protein] and UDP-N-acetyl-alpha-D-glucosamine: step 5/6. Functionally, condensation of UDP-2,3-diacylglucosamine and 2,3-diacylglucosamine-1-phosphate to form lipid A disaccharide, a precursor of lipid A, a phosphorylated glycolipid that anchors the lipopolysaccharide to the outer membrane of the cell. This chain is Lipid-A-disaccharide synthase, found in Escherichia coli O8 (strain IAI1).